A 136-amino-acid chain; its full sequence is MIPGEIITKSTEVEINNHHPETVIEVENTGDRPIQVGSHFHFYEANAALDFEREMAYGKHLDIPAGAAVRFEPGDKKEVQLVEYAGKRKIFGFRGMVNGPIDESRVYRPTDENDEYAGVFGDNGAENVNKKGGKRS.

Positions 113–136 (NDEYAGVFGDNGAENVNKKGGKRS) are disordered.

It belongs to the urease beta subunit family. As to quaternary structure, heterotrimer of UreA (gamma), UreB (beta) and UreC (alpha) subunits. Three heterotrimers associate to form the active enzyme.

Its subcellular location is the cytoplasm. The catalysed reaction is urea + 2 H2O + H(+) = hydrogencarbonate + 2 NH4(+). It participates in nitrogen metabolism; urea degradation; CO(2) and NH(3) from urea (urease route): step 1/1. The protein is Urease subunit beta of Staphylococcus aureus (strain USA300).